Reading from the N-terminus, the 284-residue chain is Tropomyosin Por p 1.0101 (284 aa).

Residue methionine 1 is modified to N-acetylmethionine. Residues methionine 1–arginine 21 are disordered. The stretch at methionine 1–glutamate 280 forms a coiled coil. Positions lysine 12–arginine 21 are enriched in basic and acidic residues.

It belongs to the tropomyosin family. Homodimer. In terms of tissue distribution, expressed in muscle (at protein level). Expressed in pincer muscles.

Tropomyosin, in association with the troponin complex, plays a central role in the calcium dependent regulation of muscle contraction. This chain is Tropomyosin Por p 1.0101, found in Portunus pelagicus (Blue swimmer crab).